A 104-amino-acid polypeptide reads, in one-letter code: Pyrimidine/purine nucleoside phosphorylase (104 aa).

Belongs to the nucleoside phosphorylase PpnP family.

The enzyme catalyses a purine D-ribonucleoside + phosphate = a purine nucleobase + alpha-D-ribose 1-phosphate. It catalyses the reaction adenosine + phosphate = alpha-D-ribose 1-phosphate + adenine. It carries out the reaction cytidine + phosphate = cytosine + alpha-D-ribose 1-phosphate. The catalysed reaction is guanosine + phosphate = alpha-D-ribose 1-phosphate + guanine. The enzyme catalyses inosine + phosphate = alpha-D-ribose 1-phosphate + hypoxanthine. It catalyses the reaction thymidine + phosphate = 2-deoxy-alpha-D-ribose 1-phosphate + thymine. It carries out the reaction uridine + phosphate = alpha-D-ribose 1-phosphate + uracil. The catalysed reaction is xanthosine + phosphate = alpha-D-ribose 1-phosphate + xanthine. Its function is as follows. Catalyzes the phosphorolysis of diverse nucleosides, yielding D-ribose 1-phosphate and the respective free bases. Can use uridine, adenosine, guanosine, cytidine, thymidine, inosine and xanthosine as substrates. Also catalyzes the reverse reactions. The protein is Pyrimidine/purine nucleoside phosphorylase of Geotalea daltonii (strain DSM 22248 / JCM 15807 / FRC-32) (Geobacter daltonii).